We begin with the raw amino-acid sequence, 2122 residues long: Pecanex-like protein 2 (2122 aa).

The next 2 helical transmembrane spans lie at 36 to 53 (LYLW…HLAF) and 60 to 82 (ALFY…YRLH). Disordered stretches follow at residues 92–164 (QHRS…ELPA) and 180–250 (QPEA…LVNP). Polar residues-rich tracts occupy residues 146–157 (SRGQSVHSQHSS) and 185–203 (ASST…SQGR). Asn288 is a glycosylation site (N-linked (GlcNAc...) asparagine). Composition is skewed to low complexity over residues 392-407 (VTSS…AESA) and 458-476 (PDRC…PGST). 2 disordered regions span residues 392–556 (VTSS…QIPN) and 575–634 (VVAP…PVFT). Residues 528–538 (STKEVVSDGEK) show a composition bias toward basic and acidic residues. An N-linked (GlcNAc...) asparagine glycan is attached at Asn556. Over residues 599-618 (TKEEAVENEKPNGRDPKPGK) the composition is skewed to basic and acidic residues. Polar residues predominate over residues 625-634 (DPANGSPVFT). Transmembrane regions (helical) follow at residues 825–845 (VAVL…NRGF), 849–869 (LWVL…LKSV), 882–902 (QIIA…ILLL), 933–953 (HLIV…FPQI), 976–998 (GITS…HAFC), 1010–1030 (HIPA…YHLS), 1080–1100 (LVIC…TVFL), 1105–1125 (FLSI…HHLL), 1174–1194 (YLLY…SISN), 1218–1238 (SFCN…FFHF), 1245–1265 (ESFL…GDLL), 1270–1290 (FVLA…HVFA), and 1305–1325 (TFAT…VIFI). N-linked (GlcNAc...) asparagine glycans are attached at residues Asn1393, Asn1534, and Asn1802. Disordered regions lie at residues 1858–1943 (SVGQ…SSGP) and 1955–1991 (STSV…TTGH). Basic and acidic residues predominate over residues 1888 to 1898 (ESRDGSTEQPR). Residues 1922 to 1942 (SQSVQAHSAISQRPPTLSSSG) are compositionally biased toward polar residues. Positions 1968–1981 (SRLSLHTSAASLHS) are enriched in low complexity. N-linked (GlcNAc...) asparagine glycosylation is present at Asn2039. The segment at 2097 to 2122 (VLCRRASQEDMGLDDTASQQSTSDEQ) is disordered. Polar residues predominate over residues 2112 to 2122 (TASQQSTSDEQ).

The protein belongs to the pecanex family.

The protein resides in the membrane. Functionally, may play a role in tumorigenesis. The polypeptide is Pecanex-like protein 2 (Mus musculus (Mouse)).